Reading from the N-terminus, the 201-residue chain is MAISLTLESTAYTLDQLTAHPEAQIALAGRSNVGKSSLVNALAGRKKLAKVSSTPGKTRSVNFYLVEPLRFYLVDLPGYGYARASHSEREKWAKLLERYLTECASLKALALLLDCRLPPQQLDLNLASFAQAHGLPLVPILTKADKCNQRERAAKQKEWQNIVGVSPVLTSSSSRLGIDRLWQELARAAGVTIIPSAENAQ.

In terms of domain architecture, EngB-type G spans 21–191 (PEAQIALAGR…WQELARAAGV (171 aa)). Residues 29-36 (GRSNVGKS), 56-60 (GKTRS), 75-78 (DLPG), 142-145 (TKAD), and 168-172 (VLTSS) each bind GTP. The Mg(2+) site is built by S36 and T58.

This sequence belongs to the TRAFAC class TrmE-Era-EngA-EngB-Septin-like GTPase superfamily. EngB GTPase family. It depends on Mg(2+) as a cofactor.

Necessary for normal cell division and for the maintenance of normal septation. This Desulfovibrio desulfuricans (strain ATCC 27774 / DSM 6949 / MB) protein is Probable GTP-binding protein EngB.